The following is a 241-amino-acid chain: Methylthioribulose-1-phosphate dehydratase (241 aa).

Cysteine 96 contacts substrate. Histidine 114 and histidine 116 together coordinate Zn(2+). Glutamate 138 functions as the Proton donor/acceptor in the catalytic mechanism. Residue histidine 194 participates in Zn(2+) binding.

The protein belongs to the aldolase class II family. MtnB subfamily. Homotetramer. Interacts with APAF1. May interact with CASP1. Zn(2+) is required as a cofactor. Expressed in skeletal muscle (at protein level).

It localises to the cytoplasm. The enzyme catalyses 5-(methylsulfanyl)-D-ribulose 1-phosphate = 5-methylsulfanyl-2,3-dioxopentyl phosphate + H2O. It functions in the pathway amino-acid biosynthesis; L-methionine biosynthesis via salvage pathway; L-methionine from S-methyl-5-thio-alpha-D-ribose 1-phosphate: step 2/6. Catalyzes the dehydration of methylthioribulose-1-phosphate (MTRu-1-P) into 2,3-diketo-5-methylthiopentyl-1-phosphate (DK-MTP-1-P). Functions in the methionine salvage pathway, which plays a key role in cancer, apoptosis, microbial proliferation and inflammation. May inhibit the CASP1-related inflammatory response (pyroptosis), the CASP9-dependent apoptotic pathway and the cytochrome c-dependent and APAF1-mediated cell death. This Mus musculus (Mouse) protein is Methylthioribulose-1-phosphate dehydratase.